Here is a 414-residue protein sequence, read N- to C-terminus: Light-independent protochlorophyllide reductase subunit N (414 aa).

[4Fe-4S] cluster-binding residues include C16, C41, and C98.

Belongs to the BchN/ChlN family. Protochlorophyllide reductase is composed of three subunits; BchL, BchN and BchB. Forms a heterotetramer of two BchB and two BchN subunits. The cofactor is [4Fe-4S] cluster.

It catalyses the reaction chlorophyllide a + oxidized 2[4Fe-4S]-[ferredoxin] + 2 ADP + 2 phosphate = protochlorophyllide a + reduced 2[4Fe-4S]-[ferredoxin] + 2 ATP + 2 H2O. It functions in the pathway porphyrin-containing compound metabolism; bacteriochlorophyll biosynthesis (light-independent). Component of the dark-operative protochlorophyllide reductase (DPOR) that uses Mg-ATP and reduced ferredoxin to reduce ring D of protochlorophyllide (Pchlide) to form chlorophyllide a (Chlide). This reaction is light-independent. The NB-protein (BchN-BchB) is the catalytic component of the complex. The polypeptide is Light-independent protochlorophyllide reductase subunit N (Roseiflexus castenholzii (strain DSM 13941 / HLO8)).